Reading from the N-terminus, the 2606-residue chain is Large tegument protein deneddylase (2606 aa).

Residues 1 to 235 are deubiquitination activity; the sequence is MAFQAQTDTG…LKRSGAYVNL (235 aa). The Peptidase C76 domain occupies 14 to 225; it reads LATASSHQGD…LLANYGIASA (212 aa). Residues Cys34, Asp163, and His165 contribute to the active site. Disordered stretches follow at residues 318-349, 390-411, 1020-1135, 2253-2316, and 2434-2458; these read IAISPLHSNTESDDSETGKKNTPVKITKPNEA, DTDSLLSTHESPPATPSLKSGQ, KKGL…ESSE, PEIH…PTPL, and PPHDFVEPVENGDPPGPPGSEERKY. Residues 1038 to 1050 are compositionally biased toward polar residues; it reads TPVTDSKLIQDSQ. Residues 1051-1061 are compositionally biased toward basic and acidic residues; the sequence is QNDRHQKEKPL. A compositionally biased stretch (polar residues) spans 1085–1097; sequence KPQNLSLPVSTNK. Over residues 1105-1132 the composition is skewed to low complexity; that stretch reads ESSPIESTSPSHSPVSSMESQNGSFSLE. The segment covering 2304 to 2316 has biased composition (pro residues); sequence PNPPRPTTFPTPL.

It belongs to the herpesviridae large tegument protein family. As to quaternary structure, interacts with host CUL1 and CUL4A; these interactions inhibit the E3 ligase activity of cullins. Interacts with inner tegument protein. Interacts with capsid vertex specific component CVC2. Interacts with the major capsid protein/MCP.

It is found in the virion tegument. The protein localises to the host cytoplasm. The protein resides in the host nucleus. The enzyme catalyses Thiol-dependent hydrolysis of ester, thioester, amide, peptide and isopeptide bonds formed by the C-terminal Gly of ubiquitin (a 76-residue protein attached to proteins as an intracellular targeting signal).. In terms of biological role, large tegument protein that plays multiple roles in the viral cycle. During viral entry, remains associated with the capsid while most of the tegument is detached and participates in the capsid transport toward the host nucleus. Plays a role in the routing of the capsid at the nuclear pore complex and subsequent uncoating. Within the host nucleus, acts as a deneddylase and promotes the degradation of nuclear CRLs (cullin-RING ubiquitin ligases) and thereby stabilizes nuclear CRL substrates, while cytoplasmic CRLs remain unaffected. These modifications prevent host cell cycle S-phase progression and create a favorable environment allowing efficient viral genome replication. Participates later in the secondary envelopment of capsids. Indeed, plays a linker role for the association of the outer viral tegument to the capsids together with the inner tegument protein. The sequence is that of Large tegument protein deneddylase (64) from Connochaetes taurinus (Blue wildebeest).